The following is a 168-amino-acid chain: MQSLQHKASEWSGVLTSNAFAIDDTNLFEKLGLQTFISLSTNFYNRVYDDEEEWFHLIFANSDKQIAIQNQYEFLVQRMGGPPLYSQRRGHPALIARHRAFPVTHEAAERWLHHMQQAVDTSSDIDDDSKIKLMNFFRHTAYFIVAGIELKNQNFQMPCKNAPSPCKN.

His98 is a heme b binding site.

The protein belongs to the truncated hemoglobin family. Group II subfamily. As to quaternary structure, homodimer when ferric. As to expression, mainly expressed in root nodules, but barely in leaves, roots, stems, flowers and fruits.

Its function is as follows. Hemoglobin-like protein that exhibits an unusual concentration-independent binding of O(2) and CO. Required for general plant development and during nodulation. May promote shoot organogenesis from root explants. This is Group 2 truncated hemoglobin 3-1 from Lotus japonicus (Lotus corniculatus var. japonicus).